The primary structure comprises 140 residues: MAKKVMALIKLQVEAGKANPSPPIGPALGQHGVNIMDFCKAFNARTANDAGSIIPVVITVYQDRSFTFITKTPPASMLLKRAAKISKGSGVPNRDKVGKVTHDQLVEIATLKMEDLNAADVDAAVSIIAGTARSMGIEVV.

Belongs to the universal ribosomal protein uL11 family. As to quaternary structure, part of the ribosomal stalk of the 50S ribosomal subunit. Interacts with L10 and the large rRNA to form the base of the stalk. L10 forms an elongated spine to which L12 dimers bind in a sequential fashion forming a multimeric L10(L12)X complex. Post-translationally, one or more lysine residues are methylated.

Forms part of the ribosomal stalk which helps the ribosome interact with GTP-bound translation factors. This chain is Large ribosomal subunit protein uL11, found in Desulforapulum autotrophicum (strain ATCC 43914 / DSM 3382 / VKM B-1955 / HRM2) (Desulfobacterium autotrophicum).